Here is a 354-residue protein sequence, read N- to C-terminus: Neuronal growth regulator 1 (354 aa).

A signal peptide spans 1 to 37 (MDMMLLVQGACCSNQWLAAVLLSLCCLLPSCLPAGQS). Ig-like C2-type domains follow at residues 38 to 134 (VDFP…VHLT), 139 to 221 (PKIY…KVVV), and 225 to 313 (PTIQ…LPLN). The cysteines at positions 60 and 118 are disulfide-linked. Asn73 and Asn155 each carry an N-linked (GlcNAc...) asparagine glycan. 2 cysteine pairs are disulfide-bonded: Cys160-Cys203 and Cys245-Cys297. Position 187 is a phosphotyrosine (Tyr187). Residues Asn275, Asn286, Asn294, and Asn307 are each glycosylated (N-linked (GlcNAc...) asparagine). Residue Gly324 is the site of GPI-anchor amidated glycine attachment. The propeptide at 325 to 354 (SADVLFSCWYLVLTLSSFTSIFYLKNAILQ) is removed in mature form.

This sequence belongs to the immunoglobulin superfamily. IgLON family.

The protein resides in the cell membrane. Its function is as follows. May be involved in cell-adhesion. May function as a trans-neural growth-promoting factor in regenerative axon sprouting in the mammalian brain. This is Neuronal growth regulator 1 (NEGR1) from Pongo abelii (Sumatran orangutan).